Reading from the N-terminus, the 705-residue chain is Pentatricopeptide repeat-containing protein At1g09410, mitochondrial (705 aa).

The transit peptide at 1–11 (MKSQILLRRTY) directs the protein to the mitochondrion. PPR repeat units lie at residues 16 to 46 (PPPT…CDSK), 47 to 77 (SISS…MPDR), 78 to 112 (NIIS…NVVS), 113 to 139 (WTAL…MPEK), 140 to 170 (NKVS…IPDK), 171 to 205 (DNIA…SVIT), 206 to 232 (WTTM…MPEK), 233 to 267 (TEVS…PVIA), 268 to 294 (CNAM…MKER), 295 to 329 (NDAS…GVRP), 330 to 364 (TFPT…QFDV), 365 to 395 (DVYV…FPSK), 396 to 430 (DIIM…GSTK), 432 to 462 (NEVT…MESV), and 468 to 498 (ITAH…MTVE). Residues 503-578 (VWGSLLGACR…SPGCSWTEVE (76 aa)) are type E motif. The interval 579–610 (NKVHAFTRGGINSHPEQESILKILDELDGLLR) is type E(+) motif. The interval 611–705 (EAGYNPDCSY…NGECSCKDYW (95 aa)) is type DYW motif.

The protein belongs to the PPR family. PCMP-H subfamily.

It is found in the mitochondrion. This is Pentatricopeptide repeat-containing protein At1g09410, mitochondrial (PCMP-H18) from Arabidopsis thaliana (Mouse-ear cress).